A 467-amino-acid polypeptide reads, in one-letter code: UDP-N-acetylmuramate--L-alanine ligase (467 aa).

Residue 114–120 participates in ATP binding; the sequence is GTHGKTT.

This sequence belongs to the MurCDEF family.

The protein resides in the cytoplasm. The enzyme catalyses UDP-N-acetyl-alpha-D-muramate + L-alanine + ATP = UDP-N-acetyl-alpha-D-muramoyl-L-alanine + ADP + phosphate + H(+). The protein operates within cell wall biogenesis; peptidoglycan biosynthesis. Functionally, cell wall formation. This Bradyrhizobium sp. (strain BTAi1 / ATCC BAA-1182) protein is UDP-N-acetylmuramate--L-alanine ligase.